A 700-amino-acid chain; its full sequence is Protein claret segregational (700 aa).

Phosphoserine occurs at positions 94 and 96. The disordered stretch occupies residues 141-185 (APSSITATAVKRPPVTRPAPRAAGGAAAKKPAGTGAAASSGAAAA). Over residues 149–185 (AVKRPPVTRPAPRAAGGAAAKKPAGTGAAASSGAAAA) the composition is skewed to low complexity. The stretch at 196–346 (KARFHDLLEK…ELHNTVMDLR (151 aa)) forms a coiled coil. The Kinesin motor domain maps to 348–670 (NIRVFCRIRP…LRFAASVNSC (323 aa)). Residue 434–441 (GQTGSGKT) participates in ATP binding. The segment at 664–668 (AASVN) is required for minus-end directionality. The segment at 681-700 (LNNSVANSSTQSNNSGSFDK) is disordered.

It belongs to the TRAFAC class myosin-kinesin ATPase superfamily. Kinesin family. NCD subfamily.

Its subcellular location is the cytoplasm. It is found in the cytoskeleton. It catalyses the reaction ATP + H2O = ADP + phosphate + H(+). In terms of biological role, minus-end-directed microtubule-based motor protein. Has ATPase activity. Required for normal chromosomal segregation in meiosis in females, and in early mitotic divisions of the embryo. The protein is Protein claret segregational (ncd) of Drosophila melanogaster (Fruit fly).